An 87-amino-acid polypeptide reads, in one-letter code: Small ribosomal subunit protein bS20 (87 aa).

The segment at 1–23 is disordered; that stretch reads MANHKSAIKRHKQSVKRAARNRA.

Belongs to the bacterial ribosomal protein bS20 family.

Functionally, binds directly to 16S ribosomal RNA. The polypeptide is Small ribosomal subunit protein bS20 (Oleidesulfovibrio alaskensis (strain ATCC BAA-1058 / DSM 17464 / G20) (Desulfovibrio alaskensis)).